Here is a 383-residue protein sequence, read N- to C-terminus: Succinyl-diaminopimelate desuccinylase (383 aa).

His79 provides a ligand contact to Zn(2+). Residue Asp81 is part of the active site. Asp110 contributes to the Zn(2+) binding site. Glu141 (proton acceptor) is an active-site residue. Zn(2+) is bound by residues Glu142, Glu170, and His355.

The protein belongs to the peptidase M20A family. DapE subfamily. As to quaternary structure, homodimer. It depends on Zn(2+) as a cofactor. Co(2+) is required as a cofactor.

It carries out the reaction N-succinyl-(2S,6S)-2,6-diaminopimelate + H2O = (2S,6S)-2,6-diaminopimelate + succinate. The protein operates within amino-acid biosynthesis; L-lysine biosynthesis via DAP pathway; LL-2,6-diaminopimelate from (S)-tetrahydrodipicolinate (succinylase route): step 3/3. Functionally, catalyzes the hydrolysis of N-succinyl-L,L-diaminopimelic acid (SDAP), forming succinate and LL-2,6-diaminopimelate (DAP), an intermediate involved in the bacterial biosynthesis of lysine and meso-diaminopimelic acid, an essential component of bacterial cell walls. The sequence is that of Succinyl-diaminopimelate desuccinylase from Helicobacter pylori (strain Shi470).